Here is a 294-residue protein sequence, read N- to C-terminus: tRNA-cytidine(32) 2-sulfurtransferase (294 aa).

The PP-loop motif signature appears at 58-63 (SGGKDS). Positions 133, 136, and 224 each coordinate [4Fe-4S] cluster.

The protein belongs to the TtcA family. Homodimer. Mg(2+) serves as cofactor. It depends on [4Fe-4S] cluster as a cofactor.

The protein localises to the cytoplasm. The catalysed reaction is cytidine(32) in tRNA + S-sulfanyl-L-cysteinyl-[cysteine desulfurase] + AH2 + ATP = 2-thiocytidine(32) in tRNA + L-cysteinyl-[cysteine desulfurase] + A + AMP + diphosphate + H(+). It functions in the pathway tRNA modification. Its function is as follows. Catalyzes the ATP-dependent 2-thiolation of cytidine in position 32 of tRNA, to form 2-thiocytidine (s(2)C32). The sulfur atoms are provided by the cysteine/cysteine desulfurase (IscS) system. This chain is tRNA-cytidine(32) 2-sulfurtransferase, found in Ruegeria pomeroyi (strain ATCC 700808 / DSM 15171 / DSS-3) (Silicibacter pomeroyi).